Here is a 919-residue protein sequence, read N- to C-terminus: Coiled-coil domain-containing protein 66 (919 aa).

4 disordered regions span residues 145–166 (KEET…KDEN), 456–505 (ERDR…RERE), 724–744 (ERNN…LPSP), and 762–816 (LKSD…EPSH). Positions 150-161 (QDSLHLNNTSNQ) are enriched in polar residues. The stretch at 467–558 (HQKAITAQVE…EQRIRELAQK (92 aa)) forms a coiled coil. Residues 570 to 919 (GGYGLDDVSG…NQEENFNSSF (350 aa)) form a mediates localization to cilia, centrosomes and spindle microtubules and the interaction with PCM1, CEP290, CEP104 and CSPP1 region.

Homodimer; disulfide-linked. Interacts with CEP290. Interacts with PCM1. Interacts with ARMC9, TOGARAM1, CSPP1 and CEP104. Interacts with CDK5RAP2, CEP152, CEP192, TBG1 and PRC1. As to expression, expressed in retina and blood. Expressed in retina, mainly in photoreceptors but also in outer plexiform and ganglion cell layers (at protein level).

Its subcellular location is the cytoplasm. It localises to the cytoskeleton. The protein resides in the microtubule organizing center. The protein localises to the centrosome. It is found in the centriolar satellite. Its subcellular location is the cell projection. It localises to the cilium. The protein resides in the cilium basal body. The protein localises to the cilium axoneme. It is found in the photoreceptor inner segment. Its subcellular location is the photoreceptor outer segment. Microtubule-binding protein required for ciliogenesis. May function in ciliogenesis by mediating the transport of proteins like BBS4 to the cilium, but also through the organization of the centriolar satellites. Required for the assembly of signaling-competent cilia with proper structure and length. Mediates this function in part by regulating transition zone assembly and basal body recruitment of the IFT-B complex. Cooperates with the ciliopathy proteins CSPP1 and CEP104 during cilium length regulation. Plays two important roles during cell division. First, is required for mitotic progression via regulation of spindle assembly, organization and orientation, levels of spindle microtubules (MTs), kinetochore-fiber integrity, and chromosome alignment. Second, functions during cytokinesis in part by regulating assembly and organization of central spindle and midbody MTs. Plays a role in retina morphogenesis and/or homeostasis. The protein is Coiled-coil domain-containing protein 66 (CCDC66) of Canis lupus familiaris (Dog).